Reading from the N-terminus, the 192-residue chain is Akirin-1 (192 aa).

The disordered stretch occupies residues 17–71 (LLSPGSPKRRRCAPLPGPTPGLRPPDAEPPPPFQTQTPPQSLQQPAPPGSERRLP). Serine 22 carries the phosphoserine modification. The short motif at 23 to 28 (PKRRRC) is the Nuclear localization signal element. Residues 31-49 (LPGPTPGLRPPDAEPPPPF) are compositionally biased toward pro residues. Residues 50–60 (QTQTPPQSLQQ) show a composition bias toward low complexity. Threonine 72 carries the phosphothreonine modification. A compositionally biased stretch (polar residues) spans 104–122 (ASESQPHSSALTAPSSPGS). The interval 104 to 127 (ASESQPHSSALTAPSSPGSSWMKK) is disordered. The SYVS motif signature appears at 189–192 (SYVS).

It belongs to the akirin family. In terms of tissue distribution, widely expressed with the highest expression in heart, liver, placenta and peripheral blood leukocytes.

The protein resides in the nucleus. In terms of biological role, molecular adapter that acts as a bridge between proteins, and which is involved skeletal muscle development. Functions as a signal transducer for MSTN during skeletal muscle regeneration and myogenesis. May regulate chemotaxis of both macrophages and myoblasts by reorganising actin cytoskeleton, leading to more efficient lamellipodia formation via a PI3 kinase dependent pathway. In contrast to AKIRIN2, not involved in nuclear import of proteasomes. This chain is Akirin-1, found in Homo sapiens (Human).